The following is a 1393-amino-acid chain: DNA-directed RNA polymerase subunit beta' (1393 aa).

Zn(2+)-binding residues include Cys70, Cys72, Cys85, and Cys88. Residues Asp461, Asp463, and Asp465 each contribute to the Mg(2+) site. Zn(2+)-binding residues include Cys804, Cys877, Cys884, and Cys887.

The protein belongs to the RNA polymerase beta' chain family. In terms of assembly, the RNAP catalytic core consists of 2 alpha, 1 beta, 1 beta' and 1 omega subunit. When a sigma factor is associated with the core the holoenzyme is formed, which can initiate transcription. Mg(2+) is required as a cofactor. Requires Zn(2+) as cofactor.

The enzyme catalyses RNA(n) + a ribonucleoside 5'-triphosphate = RNA(n+1) + diphosphate. Its function is as follows. DNA-dependent RNA polymerase catalyzes the transcription of DNA into RNA using the four ribonucleoside triphosphates as substrates. The chain is DNA-directed RNA polymerase subunit beta' from Rhodospirillum rubrum (strain ATCC 11170 / ATH 1.1.1 / DSM 467 / LMG 4362 / NCIMB 8255 / S1).